The primary structure comprises 310 residues: Ribosomal protein L11 methyltransferase (310 aa).

T153, G174, D196, and N239 together coordinate S-adenosyl-L-methionine.

It belongs to the methyltransferase superfamily. PrmA family.

The protein resides in the cytoplasm. The catalysed reaction is L-lysyl-[protein] + 3 S-adenosyl-L-methionine = N(6),N(6),N(6)-trimethyl-L-lysyl-[protein] + 3 S-adenosyl-L-homocysteine + 3 H(+). Its function is as follows. Methylates ribosomal protein L11. The sequence is that of Ribosomal protein L11 methyltransferase from Janthinobacterium sp. (strain Marseille) (Minibacterium massiliensis).